The following is a 219-amino-acid chain: ATP-dependent Clp protease proteolytic subunit (219 aa).

Positions 1–22 are disordered; it reads MPVGVPKVPFLNPNPDPEPDSV. The Nucleophile role is filled by Ser116. The active site involves His141.

Belongs to the peptidase S14 family. In terms of assembly, component of the chloroplastic Clp protease core complex.

It is found in the plastid. It localises to the chloroplast stroma. The catalysed reaction is Hydrolysis of proteins to small peptides in the presence of ATP and magnesium. alpha-casein is the usual test substrate. In the absence of ATP, only oligopeptides shorter than five residues are hydrolyzed (such as succinyl-Leu-Tyr-|-NHMec, and Leu-Tyr-Leu-|-Tyr-Trp, in which cleavage of the -Tyr-|-Leu- and -Tyr-|-Trp bonds also occurs).. In terms of biological role, cleaves peptides in various proteins in a process that requires ATP hydrolysis. Has a chymotrypsin-like activity. Plays a major role in the degradation of misfolded proteins. The chain is ATP-dependent Clp protease proteolytic subunit from Pelargonium hortorum (Common geranium).